Here is a 143-residue protein sequence, read N- to C-terminus: Large ribosomal subunit protein uL11 (143 aa).

The protein belongs to the universal ribosomal protein uL11 family. In terms of assembly, part of the ribosomal stalk of the 50S ribosomal subunit. Interacts with L10 and the large rRNA to form the base of the stalk. L10 forms an elongated spine to which L12 dimers bind in a sequential fashion forming a multimeric L10(L12)X complex. In terms of processing, one or more lysine residues are methylated.

In terms of biological role, forms part of the ribosomal stalk which helps the ribosome interact with GTP-bound translation factors. The chain is Large ribosomal subunit protein uL11 from Azoarcus sp. (strain BH72).